A 318-amino-acid polypeptide reads, in one-letter code: Na(+)-translocating NADH-quinone reductase subunit C (318 aa).

Residues 13–33 (WYIILFIFVLSLVAGTLLSSV) traverse the membrane as a helical segment. Threonine 281 bears the FMN phosphoryl threonine mark.

This sequence belongs to the NqrC family. As to quaternary structure, composed of six subunits; NqrA, NqrB, NqrC, NqrD, NqrE and NqrF. It depends on FMN as a cofactor.

The protein resides in the cell inner membrane. The enzyme catalyses a ubiquinone + n Na(+)(in) + NADH + H(+) = a ubiquinol + n Na(+)(out) + NAD(+). NQR complex catalyzes the reduction of ubiquinone-1 to ubiquinol by two successive reactions, coupled with the transport of Na(+) ions from the cytoplasm to the periplasm. NqrA to NqrE are probably involved in the second step, the conversion of ubisemiquinone to ubiquinol. This is Na(+)-translocating NADH-quinone reductase subunit C from Chlamydia muridarum (strain MoPn / Nigg).